The sequence spans 152 residues: Deoxyuridine 5'-triphosphate nucleotidohydrolase (152 aa).

Substrate-binding positions include 71–73 (RSG), asparagine 84, 88–90 (LID), and methionine 98.

The protein belongs to the dUTPase family. It depends on Mg(2+) as a cofactor.

It carries out the reaction dUTP + H2O = dUMP + diphosphate + H(+). It participates in pyrimidine metabolism; dUMP biosynthesis; dUMP from dCTP (dUTP route): step 2/2. Its function is as follows. This enzyme is involved in nucleotide metabolism: it produces dUMP, the immediate precursor of thymidine nucleotides and it decreases the intracellular concentration of dUTP so that uracil cannot be incorporated into DNA. The chain is Deoxyuridine 5'-triphosphate nucleotidohydrolase from Shigella flexneri.